Consider the following 245-residue polypeptide: MPRTEPRVELLAHTPEPLSLLYAAFRQCYHAGFVADMWPRLLSGEIEREKQGAFIASILESGHSSPIEHVSFTFAIEGVSRALTHQLVRHRIASFSQQSQRYVDGSHFDYVMPPAIARNAAAKARFEQFMEDVGSAYRDIKALLEQDGRTGSRANEDARFVLPQAAASKIVVTMNCRALVHFFEERCCMRAQWEIRAVADVMLGLCREVLPELFAHAGAKCERLGYCPEGERFTCGRYPLRQSMP.

The region spanning 6–220 (PRVELLAHTP…PELFAHAGAK (215 aa)) is the ThyX domain. Residues Ser65, 89 to 91 (RHR), and Gln97 each bind FAD. Residues 86 to 89 (QLVR), 97 to 101 (QQSQR), and Arg159 each bind dUMP. A ThyX motif motif is present at residues 89 to 99 (RHRIASFSQQS). FAD contacts are provided by residues 175-177 (NCR) and His181. Arg186 contributes to the dUMP binding site. The active-site Involved in ionization of N3 of dUMP, leading to its activation is Arg186.

It belongs to the thymidylate synthase ThyX family. Homotetramer. The cofactor is FAD.

The catalysed reaction is dUMP + (6R)-5,10-methylene-5,6,7,8-tetrahydrofolate + NADPH + H(+) = dTMP + (6S)-5,6,7,8-tetrahydrofolate + NADP(+). It participates in pyrimidine metabolism; dTTP biosynthesis. Catalyzes the reductive methylation of 2'-deoxyuridine-5'-monophosphate (dUMP) to 2'-deoxythymidine-5'-monophosphate (dTMP) while utilizing 5,10-methylenetetrahydrofolate (mTHF) as the methyl donor, and NADPH and FADH(2) as the reductant. In Nitratidesulfovibrio vulgaris (strain ATCC 29579 / DSM 644 / CCUG 34227 / NCIMB 8303 / VKM B-1760 / Hildenborough) (Desulfovibrio vulgaris), this protein is Flavin-dependent thymidylate synthase.